Here is a 388-residue protein sequence, read N- to C-terminus: LL-diaminopimelate aminotransferase (388 aa).

Residues Tyr16 and Gly41 each coordinate substrate. Residues Tyr70, 104–105 (SK), Tyr129, Asn179, Tyr210, and 239–241 (SLS) contribute to the pyridoxal 5'-phosphate site. Substrate is bound by residues Lys105, Tyr129, and Asn179. Residue Lys242 is modified to N6-(pyridoxal phosphate)lysine. Arg250 lines the pyridoxal 5'-phosphate pocket. Arg368 is a substrate binding site.

It belongs to the class-I pyridoxal-phosphate-dependent aminotransferase family. LL-diaminopimelate aminotransferase subfamily. In terms of assembly, homodimer. Pyridoxal 5'-phosphate is required as a cofactor.

The catalysed reaction is (2S,6S)-2,6-diaminopimelate + 2-oxoglutarate = (S)-2,3,4,5-tetrahydrodipicolinate + L-glutamate + H2O + H(+). It participates in amino-acid biosynthesis; L-lysine biosynthesis via DAP pathway; LL-2,6-diaminopimelate from (S)-tetrahydrodipicolinate (aminotransferase route): step 1/1. In terms of biological role, involved in the synthesis of meso-diaminopimelate (m-DAP or DL-DAP), required for both lysine and peptidoglycan biosynthesis. Catalyzes the direct conversion of tetrahydrodipicolinate to LL-diaminopimelate. This is LL-diaminopimelate aminotransferase from Oleidesulfovibrio alaskensis (strain ATCC BAA-1058 / DSM 17464 / G20) (Desulfovibrio alaskensis).